Consider the following 239-residue polypeptide: Ubiquinone biosynthesis O-methyltransferase (239 aa).

Arg44, Gly63, Asp84, and Met128 together coordinate S-adenosyl-L-methionine.

The protein belongs to the methyltransferase superfamily. UbiG/COQ3 family.

The enzyme catalyses a 3-demethylubiquinol + S-adenosyl-L-methionine = a ubiquinol + S-adenosyl-L-homocysteine + H(+). It carries out the reaction a 3-(all-trans-polyprenyl)benzene-1,2-diol + S-adenosyl-L-methionine = a 2-methoxy-6-(all-trans-polyprenyl)phenol + S-adenosyl-L-homocysteine + H(+). The protein operates within cofactor biosynthesis; ubiquinone biosynthesis. Its function is as follows. O-methyltransferase that catalyzes the 2 O-methylation steps in the ubiquinone biosynthetic pathway. The chain is Ubiquinone biosynthesis O-methyltransferase from Xanthomonas oryzae pv. oryzae (strain MAFF 311018).